Consider the following 314-residue polypeptide: UDP-N-acetylenolpyruvoylglucosamine reductase (314 aa).

In terms of domain architecture, FAD-binding PCMH-type spans 31 to 208; it reads RIGGPADYYA…LSARFRLTPK (178 aa). Arginine 187 is a catalytic residue. The Proton donor role is filled by serine 237. The active site involves glutamate 307.

This sequence belongs to the MurB family. Requires FAD as cofactor.

Its subcellular location is the cytoplasm. The enzyme catalyses UDP-N-acetyl-alpha-D-muramate + NADP(+) = UDP-N-acetyl-3-O-(1-carboxyvinyl)-alpha-D-glucosamine + NADPH + H(+). Its pathway is cell wall biogenesis; peptidoglycan biosynthesis. Cell wall formation. In Agathobacter rectalis (strain ATCC 33656 / DSM 3377 / JCM 17463 / KCTC 5835 / VPI 0990) (Eubacterium rectale), this protein is UDP-N-acetylenolpyruvoylglucosamine reductase.